The following is a 156-amino-acid chain: SsrA-binding protein (156 aa).

It belongs to the SmpB family.

The protein localises to the cytoplasm. Functionally, required for rescue of stalled ribosomes mediated by trans-translation. Binds to transfer-messenger RNA (tmRNA), required for stable association of tmRNA with ribosomes. tmRNA and SmpB together mimic tRNA shape, replacing the anticodon stem-loop with SmpB. tmRNA is encoded by the ssrA gene; the 2 termini fold to resemble tRNA(Ala) and it encodes a 'tag peptide', a short internal open reading frame. During trans-translation Ala-aminoacylated tmRNA acts like a tRNA, entering the A-site of stalled ribosomes, displacing the stalled mRNA. The ribosome then switches to translate the ORF on the tmRNA; the nascent peptide is terminated with the 'tag peptide' encoded by the tmRNA and targeted for degradation. The ribosome is freed to recommence translation, which seems to be the essential function of trans-translation. This chain is SsrA-binding protein, found in Staphylococcus carnosus (strain TM300).